Consider the following 301-residue polypeptide: Diaminopimelate epimerase (301 aa).

Residues Asn15, Gln47, and Asn67 each coordinate substrate. The active-site Proton donor is Cys76. Substrate-binding positions include 77-78 (GN), Asn163, Asn197, and 215-216 (ER). Cys224 functions as the Proton acceptor in the catalytic mechanism. 225 to 226 (GS) contributes to the substrate binding site.

This sequence belongs to the diaminopimelate epimerase family. As to quaternary structure, homodimer.

The protein localises to the cytoplasm. It carries out the reaction (2S,6S)-2,6-diaminopimelate = meso-2,6-diaminopimelate. It participates in amino-acid biosynthesis; L-lysine biosynthesis via DAP pathway; DL-2,6-diaminopimelate from LL-2,6-diaminopimelate: step 1/1. In terms of biological role, catalyzes the stereoinversion of LL-2,6-diaminopimelate (L,L-DAP) to meso-diaminopimelate (meso-DAP), a precursor of L-lysine and an essential component of the bacterial peptidoglycan. The chain is Diaminopimelate epimerase from Rhizobium etli (strain ATCC 51251 / DSM 11541 / JCM 21823 / NBRC 15573 / CFN 42).